The sequence spans 252 residues: Triosephosphate isomerase (252 aa).

Residue 9-11 (NWK) participates in substrate binding. The Electrophile role is filled by His-96. The Proton acceptor role is filled by Glu-166. Substrate-binding positions include Gly-172, Ser-212, and 233–234 (GG).

This sequence belongs to the triosephosphate isomerase family. In terms of assembly, homodimer.

The protein localises to the cytoplasm. It carries out the reaction D-glyceraldehyde 3-phosphate = dihydroxyacetone phosphate. Its pathway is carbohydrate biosynthesis; gluconeogenesis. The protein operates within carbohydrate degradation; glycolysis; D-glyceraldehyde 3-phosphate from glycerone phosphate: step 1/1. Functionally, involved in the gluconeogenesis. Catalyzes stereospecifically the conversion of dihydroxyacetone phosphate (DHAP) to D-glyceraldehyde-3-phosphate (G3P). The sequence is that of Triosephosphate isomerase from Prosthecochloris aestuarii (strain DSM 271 / SK 413).